A 254-amino-acid polypeptide reads, in one-letter code: 23S rRNA (guanosine-2'-O-)-methyltransferase RlmB (254 aa).

Gly-198, Ile-218, and Leu-227 together coordinate S-adenosyl-L-methionine.

Belongs to the class IV-like SAM-binding methyltransferase superfamily. RNA methyltransferase TrmH family. RlmB subfamily. In terms of assembly, homodimer.

The protein localises to the cytoplasm. The enzyme catalyses guanosine(2251) in 23S rRNA + S-adenosyl-L-methionine = 2'-O-methylguanosine(2251) in 23S rRNA + S-adenosyl-L-homocysteine + H(+). Specifically methylates the ribose of guanosine 2251 in 23S rRNA. The chain is 23S rRNA (guanosine-2'-O-)-methyltransferase RlmB from Blochmanniella floridana.